A 90-amino-acid chain; its full sequence is MIHYHAIITGRVQGVGFRYFVQGEAVNRGMKGWVRNTDEGHVELKVEGEQQEVLDFLKTVRKGSPFSKVTDMQMEQLPEFAHYQDFRIKG.

The 88-residue stretch at histidine 3–glycine 90 folds into the Acylphosphatase-like domain. Residues arginine 18 and asparagine 36 contribute to the active site.

It belongs to the acylphosphatase family.

It catalyses the reaction an acyl phosphate + H2O = a carboxylate + phosphate + H(+). The chain is Acylphosphatase (acyP) from Bacillus pumilus (strain SAFR-032).